Here is a 551-residue protein sequence, read N- to C-terminus: Arginine--tRNA ligase (551 aa).

Positions 123 to 133 (ANPTGPLTIGR) match the 'HIGH' region motif.

Belongs to the class-I aminoacyl-tRNA synthetase family. In terms of assembly, monomer.

The protein resides in the cytoplasm. It catalyses the reaction tRNA(Arg) + L-arginine + ATP = L-arginyl-tRNA(Arg) + AMP + diphosphate. This is Arginine--tRNA ligase from Prosthecochloris aestuarii (strain DSM 271 / SK 413).